We begin with the raw amino-acid sequence, 428 residues long: Adenylosuccinate synthetase (428 aa).

Residues 12-18 (GDEGKGK) and 40-42 (GHT) contribute to the GTP site. Asp-13 acts as the Proton acceptor in catalysis. Mg(2+)-binding residues include Asp-13 and Gly-40. IMP is bound by residues 13–16 (DEGK), 38–41 (NAGH), Thr-129, Arg-143, Gln-224, Thr-239, and Arg-303. Catalysis depends on His-41, which acts as the Proton donor. 299 to 305 (VTTGRIR) lines the substrate pocket. GTP-binding positions include Arg-305, 331–333 (KVD), and 410–412 (AYG).

It belongs to the adenylosuccinate synthetase family. In terms of assembly, homodimer. The cofactor is Mg(2+).

The protein resides in the cytoplasm. The catalysed reaction is IMP + L-aspartate + GTP = N(6)-(1,2-dicarboxyethyl)-AMP + GDP + phosphate + 2 H(+). Its pathway is purine metabolism; AMP biosynthesis via de novo pathway; AMP from IMP: step 1/2. In terms of biological role, plays an important role in the de novo pathway of purine nucleotide biosynthesis. Catalyzes the first committed step in the biosynthesis of AMP from IMP. This chain is Adenylosuccinate synthetase, found in Francisella tularensis subsp. tularensis (strain FSC 198).